Here is an 810-residue protein sequence, read N- to C-terminus: Abnormal pharyngeal pumping eat-20 (810 aa).

The signal sequence occupies residues 1-20; sequence MTTFCRVLLIFGIYVAVCCA. Topologically, residues 21 to 748 are extracellular; it reads QSVEDDVFHF…GKQSSAAASW (728 aa). N-linked (GlcNAc...) asparagine glycosylation is found at N90, N171, and N232. EGF-like domains follow at residues 220 to 257, 258 to 293, and 301 to 335; these read PPSP…DRCE, LDVC…LLCE, and VAPI…ANCN. 9 disulfide bridges follow: C224-C235, C229-C245, C247-C256, C261-C272, C266-C281, C283-C292, C305-C314, C309-C323, and C325-C334. An N-linked (GlcNAc...) asparagine glycan is attached at N371. Over residues 522–531 the composition is skewed to low complexity; it reads FAPTTGTQQP. 2 disordered regions span residues 522–567 and 684–738; these read FAPT…STMQ and PHPQ…HTSS. Residues 542-558 show a composition bias toward acidic residues; it reads DENEEEEEEETTEETEE. A helical transmembrane segment spans residues 749–769; it reads IIAIIALIVLGLLLLATSLFI. Residues 770–810 lie on the Cytoplasmic side of the membrane; sequence LRYIRQSRKLHGKYNPAREEHNLSAAYAMPMSHIAKEERLI.

In terms of tissue distribution, highly expressed in the pharynx, circumpharyngeal cells, pharyngeal-intestinal valve and a subset of neurons in larval and embryonic stages. Also moderately expressed in the lining of the intestine, coelomocytes, labial process bundles and some hypodermal cells. In adults, it is predominantly expressed in the pharynx, the pharyngeal-intenstinal valve, some circumpharyngeal cells, m3, m4 and m6 pharyngeal muscles, and IL1, OLQ, BAG and ALN neurons. Weaker expression is observed in labial process bundles, coelomocytes, the ventral hypodermal ridge, the vulval hypodermis and the sensory rays of the adult male tail.

It localises to the membrane. Its function is as follows. Regulates pharyngeal pumping during feeding. The polypeptide is Abnormal pharyngeal pumping eat-20 (eat-20) (Caenorhabditis elegans).